Here is a 147-residue protein sequence, read N- to C-terminus: Hemoglobin subunit beta-1 (147 aa).

Residues 3 to 147 (EWTDKERSII…VVSALGKQYH (145 aa)) form the Globin domain. Heme b is bound by residues histidine 64 and histidine 93.

Belongs to the globin family. Heterotetramer of two alpha chains and two beta chains. Red blood cells.

Its function is as follows. Involved in oxygen transport from gills to the various peripheral tissues. In Pagothenia borchgrevinki (Bald rockcod), this protein is Hemoglobin subunit beta-1 (hbb1).